A 397-amino-acid polypeptide reads, in one-letter code: Intermediate capsid protein VP6 (397 aa).

Positions 62-73 are interaction with the inner capsid protein VP2; it reads DFGLLGTTLLNL. His153 contacts Zn(2+). Positions 266 and 286 each coordinate Ca(2+).

This sequence belongs to the rotavirus VP6 family. As to quaternary structure, homotrimer. Interacts with the inner capsid protein VP2. Interacts with the outer capsid glycoprotein VP7. Interacts with the outer capsid protein VP5*. In terms of processing, the N-terminus is blocked. Sumoylated with SUMO1 and SUMO2. Sumoylation of viral proteins seems to have a positive role on viral replication.

The protein localises to the virion. Its function is as follows. Intermediate capsid protein that self assembles to form an icosahedral capsid with a T=13 symmetry, which consists of 230 trimers of VP6, with channels at each of its five-fold vertices. This capsid constitutes the middle concentric layer of the viral mature particle. The innermost VP2 capsid and the intermediate VP6 capsid remain intact following cell entry to protect the dsRNA from degradation and to prevent unfavorable antiviral responses in the host cell during all the replication cycle of the virus. Nascent transcripts are transcribed within the structural confines of this double-layered particle (DLP) and are extruded through the channels at the five-fold axes. VP6 is required for the transcription activity of the DLP. This Rotavirus A (strain RVA/Cow/France/RF/1975/G6P6[1]) (RV-A) protein is Intermediate capsid protein VP6.